The primary structure comprises 94 residues: Pyrimidine/purine nucleoside phosphorylase (94 aa).

Belongs to the nucleoside phosphorylase PpnP family.

It catalyses the reaction a purine D-ribonucleoside + phosphate = a purine nucleobase + alpha-D-ribose 1-phosphate. The enzyme catalyses adenosine + phosphate = alpha-D-ribose 1-phosphate + adenine. The catalysed reaction is cytidine + phosphate = cytosine + alpha-D-ribose 1-phosphate. It carries out the reaction guanosine + phosphate = alpha-D-ribose 1-phosphate + guanine. It catalyses the reaction inosine + phosphate = alpha-D-ribose 1-phosphate + hypoxanthine. The enzyme catalyses thymidine + phosphate = 2-deoxy-alpha-D-ribose 1-phosphate + thymine. The catalysed reaction is uridine + phosphate = alpha-D-ribose 1-phosphate + uracil. It carries out the reaction xanthosine + phosphate = alpha-D-ribose 1-phosphate + xanthine. Its function is as follows. Catalyzes the phosphorolysis of diverse nucleosides, yielding D-ribose 1-phosphate and the respective free bases. Can use uridine, adenosine, guanosine, cytidine, thymidine, inosine and xanthosine as substrates. Also catalyzes the reverse reactions. The chain is Pyrimidine/purine nucleoside phosphorylase from Escherichia coli (strain ATCC 8739 / DSM 1576 / NBRC 3972 / NCIMB 8545 / WDCM 00012 / Crooks).